A 315-amino-acid chain; its full sequence is Acetyl-coenzyme A carboxylase carboxyl transferase subunit alpha (315 aa).

The CoA carboxyltransferase C-terminal domain maps to 40–293 (LQDKSKTLTE…REELSSQLAM (254 aa)).

The protein belongs to the AccA family. In terms of assembly, acetyl-CoA carboxylase is a heterohexamer composed of biotin carboxyl carrier protein (AccB), biotin carboxylase (AccC) and two subunits each of ACCase subunit alpha (AccA) and ACCase subunit beta (AccD).

The protein localises to the cytoplasm. The catalysed reaction is N(6)-carboxybiotinyl-L-lysyl-[protein] + acetyl-CoA = N(6)-biotinyl-L-lysyl-[protein] + malonyl-CoA. Its pathway is lipid metabolism; malonyl-CoA biosynthesis; malonyl-CoA from acetyl-CoA: step 1/1. Functionally, component of the acetyl coenzyme A carboxylase (ACC) complex. First, biotin carboxylase catalyzes the carboxylation of biotin on its carrier protein (BCCP) and then the CO(2) group is transferred by the carboxyltransferase to acetyl-CoA to form malonyl-CoA. This is Acetyl-coenzyme A carboxylase carboxyl transferase subunit alpha from Pseudomonas syringae pv. tomato (strain ATCC BAA-871 / DC3000).